Consider the following 401-residue polypeptide: Argininosuccinate synthase (401 aa).

8 to 16 (AYSGGLDTS) provides a ligand contact to ATP. Tyr85 is an L-citrulline binding site. Gly115 is a binding site for ATP. Residues Thr117, Asn121, and Asp122 each coordinate L-aspartate. L-citrulline is bound at residue Asn121. L-citrulline-binding residues include Arg125, Ser173, Ser182, Glu258, and Tyr270.

This sequence belongs to the argininosuccinate synthase family. Type 1 subfamily. In terms of assembly, homotetramer.

The protein localises to the cytoplasm. It carries out the reaction L-citrulline + L-aspartate + ATP = 2-(N(omega)-L-arginino)succinate + AMP + diphosphate + H(+). The protein operates within amino-acid biosynthesis; L-arginine biosynthesis; L-arginine from L-ornithine and carbamoyl phosphate: step 2/3. This Staphylococcus saprophyticus subsp. saprophyticus (strain ATCC 15305 / DSM 20229 / NCIMB 8711 / NCTC 7292 / S-41) protein is Argininosuccinate synthase.